Reading from the N-terminus, the 1910-residue chain is Endoribonuclease dcr-1 (1910 aa).

A Helicase ATP-binding domain is found at L20–E201. L33–T40 is a binding site for ATP. The DEAH box motif lies at D145–H148. The Helicase C-terminal domain maps to E371 to S542. The Dicer dsRNA-binding fold domain occupies A571–K667. Positions Y845 to P1003 constitute a PAZ domain. Disordered regions lie at residues R951–S988, T1227–T1248, and L1272–F1309. 2 stretches are compositionally biased toward polar residues: residues I970–S988 and T1227–K1245. Residues K1245–K1280 are a coiled coil. Over residues L1272 to D1286 the composition is skewed to basic and acidic residues. A compositionally biased stretch (acidic residues) spans V1288–N1304. RNase III domains lie at V1381–G1589 and F1643–G1805. Positions 1682, 1791, and 1794 each coordinate Mg(2+). A DRBM domain is found at S1833–Q1896.

Belongs to the helicase family. Dicer subfamily. As to quaternary structure, component of the ERI/DICER complex at least composed of dcr-1, rrf-3 and eri-1. Interacts with pir-1. Mg(2+) serves as cofactor. The cofactor is Mn(2+).

In terms of biological role, component of the ERI/DICER complex which is involved in processing amplified double-stranded RNA (dsRNA) intermediates during small-RNA-mediated gene-silencing or RNA interference (RNAi). Involved in cleaving dsRNA in the RNAi pathway. It produces 21 to 23 bp dsRNAs (siRNAs) which target the selective destruction of homologous RNAs. Seems to process the precursor of the small temporal RNA let-7 which is involved in developmental timing. Required for avoidance behavior induced by small RNAs derived from pathogenic bacteria such as P.aeruginosa. Involved in innate immunity through its role in small RNA processing. Its function is as follows. tDCR-1 acts as a deoxyribonuclease (DNase) initiating DNA fragmentation during apoptosis, upstream of nucleases cps-6, crn-2 and nuc-1. The polypeptide is Endoribonuclease dcr-1 (Caenorhabditis elegans).